Consider the following 307-residue polypeptide: Phosphate import ATP-binding protein PstB (307 aa).

The interval 1–30 is disordered; sequence MSETTYTTTEDTDDTNSTDSMVGTTTGETD. Residues 48 to 302 form the ABC transporter domain; sequence LGVDDLDVYY…PQSERVEDYI (255 aa). Position 80–87 (80–87) interacts with ATP; sequence GPSGCGKS.

This sequence belongs to the ABC transporter superfamily. Phosphate importer (TC 3.A.1.7) family. As to quaternary structure, the complex is composed of two ATP-binding proteins (PstB), two transmembrane proteins (PstC and PstA) and a solute-binding protein (PstS).

Its subcellular location is the cell membrane. It carries out the reaction phosphate(out) + ATP + H2O = ADP + 2 phosphate(in) + H(+). Its function is as follows. Part of the ABC transporter complex PstSACB involved in phosphate import. Responsible for energy coupling to the transport system. This Haloquadratum walsbyi (strain DSM 16790 / HBSQ001) protein is Phosphate import ATP-binding protein PstB.